Here is a 337-residue protein sequence, read N- to C-terminus: Mitochondrial metalloendopeptidase OMA1 (337 aa).

At 1–68 (MFLNKYISNY…QPNPRDKRFQ (68 aa)) the chain is on the mitochondrial matrix side. The chain crosses the membrane as a helical span at residues 69–89 (WIFGALIAGGGVYYFTHLEYV). The Mitochondrial intermembrane portion of the chain corresponds to 90-337 (PISNRRRFND…MLQSFKEVHW (248 aa)). Residue H195 coordinates Zn(2+). E196 is an active-site residue. H199 and E250 together coordinate Zn(2+). C265 and C321 are oxidised to a cystine.

This sequence belongs to the peptidase M48 family. Zn(2+) serves as cofactor.

The protein resides in the mitochondrion inner membrane. With respect to regulation, protease activity is induced in response to various mitochondrial stress. Functionally, protease that is part of the quality control system in the inner membrane of mitochondria. Cleaves and thereby promotes the turnover of mistranslated or misfolded membrane protein. The sequence is that of Mitochondrial metalloendopeptidase OMA1 from Schizosaccharomyces pombe (strain 972 / ATCC 24843) (Fission yeast).